Reading from the N-terminus, the 190-residue chain is Glutathione peroxidase 2 (190 aa).

Residue selenocysteine 40 is part of the active site. Position 40 (selenocysteine 40) is a non-standard amino acid, selenocysteine.

This sequence belongs to the glutathione peroxidase family. Homotetramer. As to expression, exclusively expressed in the stomach and small intestine.

The protein resides in the cytoplasm. It is found in the cytosol. It carries out the reaction 2 glutathione + H2O2 = glutathione disulfide + 2 H2O. The enzyme catalyses a hydroperoxy polyunsaturated fatty acid + 2 glutathione = a hydroxy polyunsaturated fatty acid + glutathione disulfide + H2O. The catalysed reaction is tert-butyl hydroperoxide + 2 glutathione = tert-butanol + glutathione disulfide + H2O. It catalyses the reaction cumene hydroperoxide + 2 glutathione = 2-phenylpropan-2-ol + glutathione disulfide + H2O. It carries out the reaction (13S)-hydroperoxy-(9Z,11E)-octadecadienoate + 2 glutathione = (13S)-hydroxy-(9Z,11E)-octadecadienoate + glutathione disulfide + H2O. The enzyme catalyses (5S)-hydroperoxy-(6E,8Z,11Z,14Z)-eicosatetraenoate + 2 glutathione = (5S)-hydroxy-(6E,8Z,11Z,14Z)-eicosatetraenoate + glutathione disulfide + H2O. The catalysed reaction is (12R)-hydroperoxy-(5Z,8Z,10E,14Z)-eicosatetraenoate + 2 glutathione = (12R)-hydroxy-(5Z,8Z,10E,14Z)-eicosatetraenoate + glutathione disulfide + H2O. It catalyses the reaction (15S)-hydroperoxy-(5Z,8Z,11Z,13E)-eicosatetraenoate + 2 glutathione = (15S)-hydroxy-(5Z,8Z,11Z,13E)-eicosatetraenoate + glutathione disulfide + H2O. Its function is as follows. Catalyzes the reduction of hydroperoxides in a glutathione-dependent manner thus regulating cellular redox homeostasis. Can reduce small soluble hydroperoxides such as H2O2, cumene hydroperoxide and tert-butyl hydroperoxide, as well as several fatty acid-derived hydroperoxides. Cannot reduce phosphatidycholine hydroperoxide. This chain is Glutathione peroxidase 2 (GPX2), found in Macaca fuscata fuscata (Japanese macaque).